The sequence spans 694 residues: Elongation factor G (694 aa).

Residues 9–288 (DAIRNIGIMA…VIVKWLPSPL (280 aa)) enclose the tr-type G domain. GTP is bound by residues 18 to 25 (AHIDAGKT), 82 to 86 (DTPGH), and 136 to 139 (NKMD).

This sequence belongs to the TRAFAC class translation factor GTPase superfamily. Classic translation factor GTPase family. EF-G/EF-2 subfamily.

The protein localises to the cytoplasm. Its function is as follows. Catalyzes the GTP-dependent ribosomal translocation step during translation elongation. During this step, the ribosome changes from the pre-translocational (PRE) to the post-translocational (POST) state as the newly formed A-site-bound peptidyl-tRNA and P-site-bound deacylated tRNA move to the P and E sites, respectively. Catalyzes the coordinated movement of the two tRNA molecules, the mRNA and conformational changes in the ribosome. In Chlamydia trachomatis serovar L2b (strain UCH-1/proctitis), this protein is Elongation factor G.